A 713-amino-acid polypeptide reads, in one-letter code: Calpastatin (713 aa).

Positions 1 to 21 (MSRPGPKPAASSRPRRGAAAS) are enriched in low complexity. The tract at residues 1-152 (MSRPGPKPAA…SADGESVAGG (152 aa)) is disordered. Over residues 47–64 (VTASSAATGTSPRMSTTG) the composition is skewed to polar residues. Serine 57 carries the phosphoserine modification. Residue lysine 69 forms a Glycyl lysine isopeptide (Lys-Gly) (interchain with G-Cter in SUMO2) linkage. N6-acetyllysine is present on lysine 86. The segment covering 120–129 (SRSNEQIVSE) has biased composition (polar residues). Phosphoserine occurs at positions 122 and 171. Threonine 173 bears the Phosphothreonine mark. One copy of the Inhibitory domain 1 repeat lies at 208 to 260 (TNKDDPPYTGPVVLDPMDSTYLEALGIKEGTIPPEYRKLLEKNEAITGPLPDS). Positions 253–402 (ITGPLPDSPK…PEETSKCLSE (150 aa)) are disordered. A phosphoserine mark is found at serine 260 and serine 281. 3 stretches are compositionally biased toward polar residues: residues 275–285 (SDFTCSSPTGK), 294–304 (GESSKAQSAGV), and 326–346 (QALQ…QSHL). The Inhibitory domain 2 repeat unit spans residues 341-393 (DPQSHLRQAKQVKEAKAKEERQEKCGEDEDTVPAEYRLKPAKDKDGKPLLPEP). Basic and acidic residues-rich tracts occupy residues 351–365 (QVKE…QEKC) and 376–387 (YRLKPAKDKDGK). 4 positions are modified to phosphoserine: serine 401, serine 403, serine 410, and serine 445. The interval 442–507 (LARSLGTRKE…PLLPKEAEEQ (66 aa)) is disordered. The segment covering 448 to 505 (TRKEDPEDEKSLVDKVKEKAKEEDHEKLGEKEETIPPDYRLEIVKDKDGKPLLPKEAE) has biased composition (basic and acidic residues). Residues 451-504 (EDPEDEKSLVDKVKEKAKEEDHEKLGEKEETIPPDYRLEIVKDKDGKPLLPKEA) form an Inhibitory domain 3 repeat. Serine 521 and serine 532 each carry phosphoserine. The segment covering 544-558 (VSETVSQVPAPSNHT) has biased composition (polar residues). Residues 544–713 (VSETVSQVPA…PKPKVDEDAT (170 aa)) are disordered. Residues serine 580 and serine 582 each carry the phosphoserine modification. An Inhibitory domain 4 repeat occupies 588–641 (PDPDENKPLDDKVKEKIKAEHSEKLGERDDTIPPEYRHLLDNDGKDKPEKPLTK). 2 stretches are compositionally biased toward basic and acidic residues: residues 588–648 (PDPD…KLGQ) and 687–713 (SKNE…EDAT).

The protein belongs to the protease inhibitor I27 (calpastatin) family.

In terms of biological role, specific inhibition of calpain (calcium-dependent cysteine protease). Plays a key role in postmortem tenderization of meat and have been proposed to be involved in muscle protein degradation in living tissue. This is Calpastatin (Cast) from Rattus norvegicus (Rat).